A 105-amino-acid chain; its full sequence is UPF0145 protein CPS_2458 (105 aa).

It belongs to the UPF0145 family.

In Colwellia psychrerythraea (strain 34H / ATCC BAA-681) (Vibrio psychroerythus), this protein is UPF0145 protein CPS_2458.